The following is a 91-amino-acid chain: Elongation factor 1-beta (91 aa).

This sequence belongs to the EF-1-beta/EF-1-delta family.

Promotes the exchange of GDP for GTP in EF-1-alpha/GDP, thus allowing the regeneration of EF-1-alpha/GTP that could then be used to form the ternary complex EF-1-alpha/GTP/AAtRNA. This is Elongation factor 1-beta from Sulfurisphaera tokodaii (strain DSM 16993 / JCM 10545 / NBRC 100140 / 7) (Sulfolobus tokodaii).